The sequence spans 234 residues: uncharacterized protein (234 aa).

The next 7 helical transmembrane spans lie at 25-45, 57-77, 85-105, 108-128, 142-162, 163-183, and 203-223; these read LMGA…TFFL, LFFL…QGLA, LPIF…TLLM, ATDI…LSVY, AFGV…FFAS, TGLT…LIAW, and WAIS…LFLL.

Belongs to the BI1 family.

The protein localises to the cell membrane. This is an uncharacterized protein from Lactococcus lactis subsp. lactis (strain IL1403) (Streptococcus lactis).